Consider the following 302-residue polypeptide: Protoheme IX farnesyltransferase 1 (302 aa).

Helical transmembrane passes span 30 to 50 (VVALMLLTVLVGMCLALPGAV), 52 to 72 (LQPLIFGLLGIGMMAGAAAAF), 102 to 122 (ALTFSISLAVLGFVLLYTLVN), 124 to 144 (LTAWLTFASLLGYAVVYTAYL), 152 to 172 (IVVGGLAGAMPPLLGWTSVTG), 178 to 198 (ALLLVIIIFAWTPPHFWALAI), 224 to 244 (CILLYTILLAIACLLPVLVGM), 245 to 265 (CGPLYLVGSTLLSCGFIYKSW), and 282 to 302 (FSIYHLMLLFIVLLVDHYLWV).

This sequence belongs to the UbiA prenyltransferase family. Protoheme IX farnesyltransferase subfamily.

Its subcellular location is the cell inner membrane. The catalysed reaction is heme b + (2E,6E)-farnesyl diphosphate + H2O = Fe(II)-heme o + diphosphate. It functions in the pathway porphyrin-containing compound metabolism; heme O biosynthesis; heme O from protoheme: step 1/1. Converts heme B (protoheme IX) to heme O by substitution of the vinyl group on carbon 2 of heme B porphyrin ring with a hydroxyethyl farnesyl side group. This is Protoheme IX farnesyltransferase 1 from Shewanella woodyi (strain ATCC 51908 / MS32).